Consider the following 381-residue polypeptide: MSKRDFYEVLGVGRDASERDIKKAYKRLAMKFHPDRNQGDESAADKFKEVKEAYEILTDPQKKAAYDQYGHAAFEQGGGFGGGGFGGGGADFGDIFGDVFGDIFGGGRRGGGQQRAQRGADLRYNMELSLEEAVRGVSKEIEVPTLVHCDTCDGSGAKKGSSAETCGTCHGHGQVQMRQGFFAVQQTCPTCHGKGKIIKDPCNECHGQGRKQKTKTLNVKIPAGVDTGDRIRLSGEGEAGEMGAPAGDLYVQVHVREHHIFEREGNNLYCEVPVSFAMAALGGEVEVPTLDGRVNLKVPTETQTGRMFRMRGKGVKGVRGGGVGDLIVKLVVETPVNLSSRQKELLKEFDESCGGDAATKHKPKSEGFFNGVKKFFDDLTS.

Residues 5-70 form the J domain; it reads DFYEVLGVGR…QKKAAYDQYG (66 aa). Residues 136–214 form a CR-type zinc finger; it reads GVSKEIEVPT…CHGQGRKQKT (79 aa). Cysteine 149, cysteine 152, cysteine 166, cysteine 169, cysteine 188, cysteine 191, cysteine 202, and cysteine 205 together coordinate Zn(2+). CXXCXGXG motif repeat units follow at residues 149-156, 166-173, 188-195, and 202-209; these read CDTCDGSG, CGTCHGHG, CPTCHGKG, and CNECHGQG.

Belongs to the DnaJ family. As to quaternary structure, homodimer. Zn(2+) is required as a cofactor.

It localises to the cytoplasm. Its function is as follows. Participates actively in the response to hyperosmotic and heat shock by preventing the aggregation of stress-denatured proteins and by disaggregating proteins, also in an autonomous, DnaK-independent fashion. Unfolded proteins bind initially to DnaJ; upon interaction with the DnaJ-bound protein, DnaK hydrolyzes its bound ATP, resulting in the formation of a stable complex. GrpE releases ADP from DnaK; ATP binding to DnaK triggers the release of the substrate protein, thus completing the reaction cycle. Several rounds of ATP-dependent interactions between DnaJ, DnaK and GrpE are required for fully efficient folding. Also involved, together with DnaK and GrpE, in the DNA replication of plasmids through activation of initiation proteins. The polypeptide is Chaperone protein DnaJ (Vibrio campbellii (strain ATCC BAA-1116)).